We begin with the raw amino-acid sequence, 5098 residues long: Malformin synthetase mlfA (5098 aa).

Residues 225 to 616 (ERHAANRPHS…CGRADTQVKL (392 aa)) form an adenylation 1 region. A Carrier 1 domain is found at 756-829 (SRLEQEIQLA…EAASLAKVQE (74 aa)). At serine 790 the chain carries O-(pantetheine 4'-phosphoryl)serine. The segment at 867-1298 (EDVFPCTTMQ…ALDSLTLLQA (432 aa)) is condensation 1. Residues 1326–1715 (DGWVTRQPES…GRKDTQVKLR (390 aa)) are adenylation 2. Residues 1853–1930 (TAASELERTL…QLAAEFGEPA (78 aa)) form the Carrier 2 domain. At serine 1890 the chain carries O-(pantetheine 4'-phosphoryl)serine. 2 disordered regions span residues 1930–1960 (AGQS…DGVD) and 1993–2022 (GSSS…RVVS). Composition is skewed to low complexity over residues 1933–1957 (SASS…STND) and 1993–2011 (GSSS…SSSS). Residues 2063–2478 (EDIYPATALQ…ALSHSDRQTL (416 aa)) form a condensation 2 region. Positions 2501 to 2893 (VRTPHAPAVC…IGRRDGQLKL (393 aa)) are adenylation 3. The 77-residue stretch at 3029–3105 (RPVTAQEREM…QLMRHLSATR (77 aa)) folds into the Carrier 3 domain. Position 3066 is an O-(pantetheine 4'-phosphoryl)serine (serine 3066). 2 condensation regions span residues 3122 to 3587 (WVAL…TYDQ) and 3608 to 4027 (NIYP…EQLM). Positions 4052–4442 (HASREAVCAW…VGRKDNQIKF (391 aa)) are adenylation 4. The Carrier 4 domain occupies 4576-4652 (MPSTAAERKM…DLAYRTTNLV (77 aa)). The residue at position 4613 (serine 4613) is an O-(pantetheine 4'-phosphoryl)serine. The tract at residues 4689–5016 (DVLPTTSFQR…LQTIVQHQNN (328 aa)) is condensation 5.

The protein belongs to the NRP synthetase family.

It participates in secondary metabolite biosynthesis. Its function is as follows. Nonribosomal peptide synthetase; part of the gene cluster that mediates the biosynthesis of malformins, cyclic pentapeptides with a disulfide bond between 2 consecutive cysteins, that show potential anti-tumor as well as antimalarial and antitrypanosomal properties. The nonribosomal peptide synthetase mlfA is responsible of the formation of the cyclic pentapeptide. The malformin biosynthesis clusters in malformin-producing fungi also contain enzymes involved in the formation of the disulfide bond between the two consecutive cysteins within malformins, in addition to additional tailoring enzymes such as methyltransferases or oxidoreductases. They are also composed of up to 4 major facilitator superfamily transporters, and transcription factors probably involved in the regulation of the expression of those clusters. The polypeptide is Malformin synthetase mlfA (Aspergillus homomorphus (strain CBS 101889)).